The primary structure comprises 168 residues: MAAFTSTTTAAAASPTPCRPAALVARSSAAPLRSAAPVVVAAGLRRAAAPSRRGATLRVQAKKQTFSSFDELLEKSEKPVLVDFYATWCGPCQYMVPILQEVSEKLGDKIQVVKIDTEKYTSIANRYQIEALPTFIIFKNGKPCHRFEGALPANQLIQQIESALEVAK.

Residues 1–58 (MAAFTSTTTAAAASPTPCRPAALVARSSAAPLRSAAPVVVAAGLRRAAAPSRRGATLR) constitute a chloroplast transit peptide. The region spanning 59 to 165 (VQAKKQTFSS…LIQQIESALE (107 aa)) is the Thioredoxin domain. Active-site nucleophile residues include Cys89 and Cys92. An intrachain disulfide couples Cys89 to Cys92.

The protein belongs to the thioredoxin family. Plant Y-type subfamily.

The protein resides in the plastid. It is found in the chloroplast. Functionally, probable thiol-disulfide oxidoreductase that may participate in various redox reactions. The sequence is that of Thioredoxin Y, chloroplastic from Oryza sativa subsp. japonica (Rice).